The chain runs to 215 residues: MKVILLGAPGAGKGTQAQFIMHKFGIPQISTGDMFRAAIKEGTELGKQAKALMDQGKLVPDDLTVALVKDRIAQPDCAHGFLLDGFPRTIPQADALKDAGVKIDLVLEFDVADEVIVERMSGRRVHQPSGRTYHIIYNPPKVAGQDDITGEELITRADDKAETVLERLAVYHQQTKPLIAYYIAEAEKGNTRYERLDGTKPVEQVSAELANIFNQ.

Residue 10 to 15 (GAGKGT) coordinates ATP. Residues 30-59 (STGDMFRAAIKEGTELGKQAKALMDQGKLV) are NMP. Residues Thr-31, Arg-36, 57–59 (KLV), 85–88 (GFPR), and Gln-92 each bind AMP. An LID region spans residues 122 to 159 (GRRVHQPSGRTYHIIYNPPKVAGQDDITGEELITRADD). Residues Arg-123 and 132 to 133 (TY) contribute to the ATP site. The AMP site is built by Arg-156 and Arg-167. Lys-200 is a binding site for ATP.

Belongs to the adenylate kinase family. As to quaternary structure, monomer.

The protein resides in the cytoplasm. The catalysed reaction is AMP + ATP = 2 ADP. The protein operates within purine metabolism; AMP biosynthesis via salvage pathway; AMP from ADP: step 1/1. In terms of biological role, catalyzes the reversible transfer of the terminal phosphate group between ATP and AMP. Plays an important role in cellular energy homeostasis and in adenine nucleotide metabolism. The chain is Adenylate kinase from Haemophilus ducreyi (strain 35000HP / ATCC 700724).